The primary structure comprises 158 residues: C-type lectin BML-2 (158 aa).

An N-terminal signal peptide occupies residues 1 to 23 (MGHFTFTGLCLLAMFLSLRGAEC). Disulfide bonds link Cys-26–Cys-37, Cys-54–Cys-154, Cys-61–Cys-156, and Cys-129–Cys-146. The C-type lectin domain maps to 33–155 (KNGLCYKVFS…CESLHPFLCQ (123 aa)). A Mannose-binding motif is present at residues 119–121 (EPN). Residue Asn-121 is glycosylated (N-linked (GlcNAc...) asparagine). Positions 127, 142, and 143 each coordinate Ca(2+).

It belongs to the true venom lectin family. As to quaternary structure, dimer. Probably non-covalently linked. As to expression, expressed by the venom gland.

It is found in the secreted. Functionally, recombinant C-type lectin BML-2 is able to agglutinate erythrocytes. May be a calcium-dependent lectin. In Bungarus multicinctus (Many-banded krait), this protein is C-type lectin BML-2.